Reading from the N-terminus, the 194-residue chain is Adenylate kinase isoenzyme 1 (194 aa).

M1 carries the post-translational modification N-acetylmethionine. G18–T23 contacts ATP. The residue at position 38 (S38) is a Phosphoserine. The segment at S38–V67 is NMP. AMP is bound by residues T39, R44, Q65–V67, G94–R97, and Q101. Residues K131–D141 form an LID region. R132 serves as a coordination point for ATP. The AMP site is built by R138 and R149. G177 is a binding site for ATP.

The protein belongs to the adenylate kinase family. AK1 subfamily. As to quaternary structure, monomer. Mg(2+) serves as cofactor.

The protein resides in the cytoplasm. The enzyme catalyses a ribonucleoside 5'-phosphate + ATP = a ribonucleoside 5'-diphosphate + ADP. It catalyses the reaction AMP + ATP = 2 ADP. It carries out the reaction dAMP + ATP = dADP + ADP. The catalysed reaction is dATP + AMP = dADP + ADP. The enzyme catalyses dAMP + dATP = 2 dADP. It catalyses the reaction a 2'-deoxyribonucleoside 5'-diphosphate + ATP = a 2'-deoxyribonucleoside 5'-triphosphate + ADP. It carries out the reaction a ribonucleoside 5'-diphosphate + ATP = a ribonucleoside 5'-triphosphate + ADP. The catalysed reaction is CDP + GTP = CTP + GDP. The enzyme catalyses GDP + ATP = GTP + ADP. It catalyses the reaction UDP + ATP = UTP + ADP. It carries out the reaction GTP + UDP = UTP + GDP. The catalysed reaction is dTDP + GTP = dTTP + GDP. The enzyme catalyses dCDP + GTP = dCTP + GDP. It catalyses the reaction dGDP + ATP = dGTP + ADP. It carries out the reaction dADP + GTP = dATP + GDP. The catalysed reaction is thiamine diphosphate + ADP = thiamine triphosphate + AMP. Functionally, catalyzes the reversible transfer of the terminal phosphate group between ATP and AMP. Also displays broad nucleoside diphosphate kinase activity. Plays an important role in cellular energy homeostasis and in adenine nucleotide metabolism. Also catalyzes at a very low rate the synthesis of thiamine triphosphate (ThTP) from thiamine diphosphate (ThDP) and ADP. The protein is Adenylate kinase isoenzyme 1 of Bos taurus (Bovine).